A 286-amino-acid polypeptide reads, in one-letter code: NH(3)-dependent NAD(+) synthetase (286 aa).

43–50 (GVSGGVDS) is an ATP binding site. A Mg(2+)-binding site is contributed by D49. Position 131 (R131) interacts with deamido-NAD(+). T151 is a binding site for ATP. E156 is a Mg(2+) binding site. Positions 164 and 171 each coordinate deamido-NAD(+). The ATP site is built by K180 and S202. The segment at 257–286 (HEASSHKRSPPASPDLGEIKKHYKQHAGKK) is disordered. 262–263 (HK) lines the deamido-NAD(+) pocket. Residues 277-286 (KHYKQHAGKK) show a composition bias toward basic residues.

It belongs to the NAD synthetase family. Homodimer.

It catalyses the reaction deamido-NAD(+) + NH4(+) + ATP = AMP + diphosphate + NAD(+) + H(+). It participates in cofactor biosynthesis; NAD(+) biosynthesis; NAD(+) from deamido-NAD(+) (ammonia route): step 1/1. Functionally, catalyzes the ATP-dependent amidation of deamido-NAD to form NAD. Uses ammonia as a nitrogen source. This is NH(3)-dependent NAD(+) synthetase from Aeropyrum pernix (strain ATCC 700893 / DSM 11879 / JCM 9820 / NBRC 100138 / K1).